A 279-amino-acid polypeptide reads, in one-letter code: Fatty acid desaturase 4-like 2, chloroplastic (279 aa).

The N-terminal 30 residues, 1 to 30, are a transit peptide targeting the chloroplast; the sequence is MATSLQTKYTLNPITNNIPRSHRPSFLRVT. The next 3 membrane-spanning stretches (helical) occupy residues 68–90, 98–118, and 178–198; these read LWVA…GAFG, SLAG…YHWA, and VVHG…LFHA.

The protein belongs to the fatty acid desaturase CarF family.

It is found in the plastid. Its subcellular location is the chloroplast membrane. Its pathway is lipid metabolism; fatty acid metabolism. Functionally, fatty acid desaturase involved in the production of chloroplast-specific phosphatidylglycerol molecular species. Catalyzes the formation of a trans double bond introduced close to the carboxyl group of palmitic acid, which is specifically esterified to the sn-2 glyceryl carbon of phosphatidylglycerol. This Arabidopsis thaliana (Mouse-ear cress) protein is Fatty acid desaturase 4-like 2, chloroplastic (FAD4L2).